The primary structure comprises 138 residues: Basic phospholipase A2 homolog Tbo-K49 (138 aa).

A signal peptide spans 1 to 16 (MRTLWIMAVLLVGVEG). 6 disulfides stabilise this stretch: Cys42–Cys131, Cys44–Cys60, Cys59–Cys111, Cys65–Cys138, Cys66–Cys104, and Cys91–Cys102. Residues 121 to 133 (KKERINTKIFCKK) are important for membrane-damaging activities in eukaryotes and bacteria; heparin-binding.

Monomer. As to expression, expressed by the venom gland.

The protein resides in the secreted. Its function is as follows. Snake venom phospholipase A2 homolog that lacks catalytic activity. It induces local edema. Is myotoxic. A model of myotoxic mechanism has been proposed: an apo Lys49-PLA2 is activated by the entrance of a hydrophobic molecule (e.g. fatty acid) at the hydrophobic channel of the protein leading to a reorientation of a monomer. This reorientation causes a transition between 'inactive' to 'active' states, causing alignment of C-terminal and membrane-docking sites (MDoS) side-by-side and putting the membrane-disruption sites (MDiS) in the same plane, exposed to solvent and in a symmetric position for both monomers. The MDoS region stabilizes the toxin on membrane by the interaction of charged residues with phospholipid head groups. Subsequently, the MDiS region destabilizes the membrane with penetration of hydrophobic residues. This insertion causes a disorganization of the membrane, allowing an uncontrolled influx of ions (i.e. calcium and sodium), and eventually triggering irreversible intracellular alterations and cell death. This is Basic phospholipase A2 homolog Tbo-K49 from Craspedocephalus borneensis (Borneo pit viper).